Here is a 421-residue protein sequence, read N- to C-terminus: MTFEATEYAKSIATKAKEASRALKSLTTLQKNSVLKRVETLLLENETAIIKENQIDLQNGIQKGLSSAMMDRLLLDSKRIQSMAKSIEEIRNLPDPVGEVVRGTILPNGLELLTKRVPIGVVMTIFESRPNVIVDIASLSFKSGNACILRGGSEAYHSNLILSSLFHQAIGESNLPSVTKDVVSFVENTDREAMVPFFQLDDLIDVIVPRGGEALIRFVSENSKIPVIKHDKGVTNLYLSNKAKEDIVLPILINSKVQRPGVCNALENLFIHKDYPHIQTLLSDLQKAGVQVLGDQSTQSIFPNLPLATEADFYTEFLDTRLSVKIVKSVEDAMQNIQNYSSGHTECILSEDESEIQTFRQGLDSAAIFVNCSTRFHDGGEFGLGAEVGISTGKLHVRGPMGLIHLTTTTTYVTGKGQVRG.

Belongs to the gamma-glutamyl phosphate reductase family.

It is found in the cytoplasm. The enzyme catalyses L-glutamate 5-semialdehyde + phosphate + NADP(+) = L-glutamyl 5-phosphate + NADPH + H(+). The protein operates within amino-acid biosynthesis; L-proline biosynthesis; L-glutamate 5-semialdehyde from L-glutamate: step 2/2. Its function is as follows. Catalyzes the NADPH-dependent reduction of L-glutamate 5-phosphate into L-glutamate 5-semialdehyde and phosphate. The product spontaneously undergoes cyclization to form 1-pyrroline-5-carboxylate. This is Gamma-glutamyl phosphate reductase from Leptospira biflexa serovar Patoc (strain Patoc 1 / ATCC 23582 / Paris).